A 308-amino-acid polypeptide reads, in one-letter code: Maspardin (308 aa).

The region spanning 87-159 is the AB hydrolase-1 domain; that stretch reads FCDGFRKLLD…NSFWLMPAFM (73 aa). Position 304 is a phosphoserine (serine 304).

It belongs to the AB hydrolase superfamily. Interacts with CD4. Interacts with ALDH16A1.

It is found in the cytoplasm. May play a role as a negative regulatory factor in CD4-dependent T-cell activation. The sequence is that of Maspardin (SPG21) from Pongo abelii (Sumatran orangutan).